Consider the following 232-residue polypeptide: MNLPPLTPATLIRRYKRFLADCALASGEIITVHCPNSGSMRSCAEPGQPILISQSGNPKRKLPWTWELYWSGASWVCINTQHPNAVVAEAIAAGDIPALQNYAQLRREVPYGSHERVDVLLSSEGRPPCYVEVKSCTLLEEDGVIRFPDAVSSRALRHLGALTEVVRGGGRAVMLFLIGREDGRGFAPADAIDPAYGKALRRARTDGVEILAYRTRLSPDKISLSVAEPLLF.

It belongs to the SfsA family.

The polypeptide is Sugar fermentation stimulation protein homolog (Acidithiobacillus ferrooxidans (strain ATCC 23270 / DSM 14882 / CIP 104768 / NCIMB 8455) (Ferrobacillus ferrooxidans (strain ATCC 23270))).